A 356-amino-acid polypeptide reads, in one-letter code: 5-amino-6-(D-ribitylamino)uracil--L-tyrosine 4-hydroxyphenyl transferase (356 aa).

A Radical SAM core domain is found at 47-281; it reads VTYIVNRNIN…AIARILLNTH (235 aa). [4Fe-4S] cluster-binding residues include C61, C65, and C68.

Belongs to the radical SAM superfamily. CofH family. Consists of two subunits, CofG and CofH. The cofactor is [4Fe-4S] cluster.

The enzyme catalyses 5-amino-6-(D-ribitylamino)uracil + L-tyrosine + S-adenosyl-L-methionine = 5-amino-5-(4-hydroxybenzyl)-6-(D-ribitylimino)-5,6-dihydrouracil + 2-iminoacetate + 5'-deoxyadenosine + L-methionine + H(+). It functions in the pathway cofactor biosynthesis; coenzyme F0 biosynthesis. Functionally, catalyzes the radical-mediated synthesis of 5-amino-5-(4-hydroxybenzyl)-6-(D-ribitylimino)-5,6-dihydrouracil from 5-amino-6-(D-ribitylamino)uracil and L-tyrosine. This chain is 5-amino-6-(D-ribitylamino)uracil--L-tyrosine 4-hydroxyphenyl transferase, found in Methanococcoides burtonii (strain DSM 6242 / NBRC 107633 / OCM 468 / ACE-M).